The following is a 336-amino-acid chain: Ketol-acid reductoisomerase (NADP(+)) (336 aa).

The KARI N-terminal Rossmann domain occupies M1–T182. NADP(+) is bound by residues F25 to Q28, R48, S51, S53, and D83 to Q86. The active site involves H108. NADP(+) is bound at residue G134. The KARI C-terminal knotted domain maps to T183 to L328. The Mg(2+) site is built by D191, E195, E227, and E231. Residue S252 coordinates substrate.

It belongs to the ketol-acid reductoisomerase family. The cofactor is Mg(2+).

The catalysed reaction is (2R)-2,3-dihydroxy-3-methylbutanoate + NADP(+) = (2S)-2-acetolactate + NADPH + H(+). The enzyme catalyses (2R,3R)-2,3-dihydroxy-3-methylpentanoate + NADP(+) = (S)-2-ethyl-2-hydroxy-3-oxobutanoate + NADPH + H(+). Its pathway is amino-acid biosynthesis; L-isoleucine biosynthesis; L-isoleucine from 2-oxobutanoate: step 2/4. The protein operates within amino-acid biosynthesis; L-valine biosynthesis; L-valine from pyruvate: step 2/4. Functionally, involved in the biosynthesis of branched-chain amino acids (BCAA). Catalyzes an alkyl-migration followed by a ketol-acid reduction of (S)-2-acetolactate (S2AL) to yield (R)-2,3-dihydroxy-isovalerate. In the isomerase reaction, S2AL is rearranged via a Mg-dependent methyl migration to produce 3-hydroxy-3-methyl-2-ketobutyrate (HMKB). In the reductase reaction, this 2-ketoacid undergoes a metal-dependent reduction by NADPH to yield (R)-2,3-dihydroxy-isovalerate. The chain is Ketol-acid reductoisomerase (NADP(+)) from Thermotoga neapolitana (strain ATCC 49049 / DSM 4359 / NBRC 107923 / NS-E).